Here is a 1188-residue protein sequence, read N- to C-terminus: F-box only protein 38 (1188 aa).

In terms of domain architecture, F-box spans 30 to 75 (MNQLSHEVLCHIFRYLPLQDIMCMECLSRKLKEAVTLYLRVVRVVD). The tract at residues 59-119 (KLKEAVTLYL…LHPRYLERRR (61 aa)) is interaction with KLF7. 3 short sequence motifs (nuclear export signal) span residues 194-201 (LHLVGVNV), 307-316 (LEVDLGYLII), and 451-460 (LLPSLEFISL). A disordered region spans residues 487–526 (ALVSNQNSNNDDNNAQNNNANIHDNNHHHPDDSDEENDFR). A compositionally biased stretch (low complexity) spans 491–509 (NQNSNNDDNNAQNNNANIH). Threonine 591 bears the Phosphothreonine mark. Serine 598, serine 600, and serine 606 each carry phosphoserine. Disordered stretches follow at residues 620 to 666 (RRYS…FPLE), 685 to 766 (MKAA…MEEG), and 787 to 909 (RTSR…STSD). Basic and acidic residues-rich tracts occupy residues 621 to 630 (RYSEREEKTG) and 685 to 699 (MKAARDIPEKKKNKD). Residues 703-740 (SCSSTTASTVGNSSSHNTASQSPDFVRTVNSGGSSEPS) show a composition bias toward polar residues. Phosphoserine occurs at positions 736 and 740. Residues 787 to 798 (RTSRCSDEERPS) show a composition bias toward basic and acidic residues. Over residues 849-861 (SSQPESCDVQSNE) the composition is skewed to polar residues. Over residues 889-900 (TKPRHAMKRKRT) the composition is skewed to basic residues. A Nuclear localization signal motif is present at residues 896–899 (KRKR).

In terms of assembly, part of the SCF (SKP1-CUL1-F-box) E3 ubiquitin-protein ligase complex SCF(FBXO38) composed of CUL1, SKP1, RBX1 and FBXO38. Interacts with KLF7. Interacts with PDCD1/PD-1.

The protein localises to the cytoplasm. Its subcellular location is the cytosol. It is found in the nucleus. The protein operates within protein modification; protein ubiquitination. In terms of biological role, substrate recognition component of a SCF (SKP1-CUL1-F-box protein) E3 ubiquitin-protein ligase complex which mediates the ubiquitination and subsequent proteasomal degradation of PDCD1/PD-1, thereby regulating T-cells-mediated immunity. Required for anti-tumor activity of T-cells by promoting the degradation of PDCD1/PD-1; the PDCD1-mediated inhibitory pathway being exploited by tumors to attenuate anti-tumor immunity and facilitate tumor survival. May indirectly stimulate the activity of transcription factor KLF7, a regulator of neuronal differentiation, without promoting KLF7 ubiquitination. The sequence is that of F-box only protein 38 from Homo sapiens (Human).